Reading from the N-terminus, the 315-residue chain is Cytochrome f (315 aa).

The first 30 residues, methionine 1–alanine 30, serve as a signal peptide directing secretion. Heme is bound by residues tyrosine 31, cysteine 51, cysteine 54, and histidine 55. Residues isoleucine 281–leucine 300 form a helical membrane-spanning segment.

This sequence belongs to the cytochrome f family. The 4 large subunits of the cytochrome b6-f complex are cytochrome b6, subunit IV (17 kDa polypeptide, petD), cytochrome f and the Rieske protein, while the 4 small subunits are PetG, PetL, PetM and PetN. The complex functions as a dimer. It depends on heme as a cofactor.

Its subcellular location is the plastid. The protein localises to the chloroplast thylakoid membrane. Component of the cytochrome b6-f complex, which mediates electron transfer between photosystem II (PSII) and photosystem I (PSI), cyclic electron flow around PSI, and state transitions. This Chlorella vulgaris (Green alga) protein is Cytochrome f (petA).